The chain runs to 400 residues: Elongation factor Tu 2 (400 aa).

Residues 10–209 (KPHVNIGTIG…KVDEYIPTPQ (200 aa)) form the tr-type G domain. The G1 stretch occupies residues 19–26 (GHVDHGKT). 19-26 (GHVDHGKT) is a binding site for GTP. Residue Thr-26 participates in Mg(2+) binding. Positions 60-64 (GITIN) are G2. The interval 81–84 (DCPG) is G3. Residues 81-85 (DCPGH) and 136-139 (NKAD) each bind GTP. Residues 136–139 (NKAD) form a G4 region. The G5 stretch occupies residues 174 to 176 (SAL).

It belongs to the TRAFAC class translation factor GTPase superfamily. Classic translation factor GTPase family. EF-Tu/EF-1A subfamily. Monomer.

It localises to the cytoplasm. The enzyme catalyses GTP + H2O = GDP + phosphate + H(+). GTP hydrolase that promotes the GTP-dependent binding of aminoacyl-tRNA to the A-site of ribosomes during protein biosynthesis. The chain is Elongation factor Tu 2 from Carboxydothermus hydrogenoformans (strain ATCC BAA-161 / DSM 6008 / Z-2901).